A 158-amino-acid chain; its full sequence is SsrA-binding protein (158 aa).

The segment at 131 to 158 (KQLHDKRQTEKERDWNKQKQRILQTNQR) is disordered. A compositionally biased stretch (basic and acidic residues) spans 132 to 147 (QLHDKRQTEKERDWNK).

Belongs to the SmpB family.

The protein localises to the cytoplasm. Its function is as follows. Required for rescue of stalled ribosomes mediated by trans-translation. Binds to transfer-messenger RNA (tmRNA), required for stable association of tmRNA with ribosomes. tmRNA and SmpB together mimic tRNA shape, replacing the anticodon stem-loop with SmpB. tmRNA is encoded by the ssrA gene; the 2 termini fold to resemble tRNA(Ala) and it encodes a 'tag peptide', a short internal open reading frame. During trans-translation Ala-aminoacylated tmRNA acts like a tRNA, entering the A-site of stalled ribosomes, displacing the stalled mRNA. The ribosome then switches to translate the ORF on the tmRNA; the nascent peptide is terminated with the 'tag peptide' encoded by the tmRNA and targeted for degradation. The ribosome is freed to recommence translation, which seems to be the essential function of trans-translation. This Teredinibacter turnerae (strain ATCC 39867 / T7901) protein is SsrA-binding protein.